We begin with the raw amino-acid sequence, 219 residues long: Histone H1.4 (219 aa).

The segment covering 1 to 15 (MSETAPAAPAAPAPA) has biased composition (low complexity). The disordered stretch occupies residues 1 to 41 (MSETAPAAPAAPAPAEKTPIKKKARKAAGGAKRKASGPPVS). S2 is subject to N-acetylserine. A Phosphoserine modification is found at S2. At K17 the chain carries N6-acetyllysine. T18 carries the post-translational modification Phosphothreonine. A compositionally biased stretch (basic residues) spans 20 to 35 (IKKKARKAAGGAKRKA). At K26 the chain carries N6-acetyllysine; alternate. An N6-methyllysine; alternate modification is found at K26. K34 carries the N6-(beta-hydroxybutyryl)lysine; alternate modification. An N6-succinyllysine; alternate modification is found at K34. S36 bears the Phosphoserine mark. The 74-residue stretch at 36–109 (SGPPVSELIT…GASGSFKLNK (74 aa)) folds into the H15 domain. K52 carries the post-translational modification N6-(beta-hydroxybutyryl)lysine. R54 carries the citrulline modification. K64, K85, K90, and K106 each carry N6-(beta-hydroxybutyryl)lysine. The disordered stretch occupies residues 92-219 (TLVQTKGTGA…KPKKTAAKKK (128 aa)). A compositionally biased stretch (basic residues) spans 119–140 (KAKKAGAAKAKKPAGAAKKPKK). The residue at position 146 (T146) is a Phosphothreonine. 2 stretches are compositionally biased toward basic residues: residues 149-160 (KSTKKTPKKAKK) and 168-185 (KKAKSPKKAKATKAKKAP). At S150 the chain carries ADP-ribosylserine. A Phosphoserine modification is found at S187. The segment covering 192-219 (RAVKPKAAKPKTSKPKAAKPKKTAAKKK) has biased composition (basic residues).

This sequence belongs to the histone H1/H5 family. Post-translationally, H1 histones are progressively phosphorylated during the cell cycle, becoming maximally phosphorylated during late G2 phase and M phase, and being dephosphorylated sharply thereafter. Acetylated at Lys-26. Deacetylated at Lys-26 by SIRT1. In terms of processing, citrullination at Arg-54 (H1R54ci) by PADI4 takes place within the DNA-binding site of H1 and results in its displacement from chromatin and global chromatin decondensation, thereby promoting pluripotency and stem cell maintenance. Post-translationally, ADP-ribosylated on Ser-150 in response to DNA damage.

It is found in the nucleus. Its subcellular location is the chromosome. Functionally, histone H1 protein binds to linker DNA between nucleosomes forming the macromolecular structure known as the chromatin fiber. Histones H1 are necessary for the condensation of nucleosome chains into higher-order structured fibers. Also acts as a regulator of individual gene transcription through chromatin remodeling, nucleosome spacing and DNA methylation. The polypeptide is Histone H1.4 (Rattus norvegicus (Rat)).